Reading from the N-terminus, the 26-residue chain is Hemocyanin subunit 5 (26 aa).

The protein belongs to the tyrosinase family. Hemocyanin subfamily. Hemolymph.

It is found in the secreted. Its subcellular location is the extracellular space. Hemocyanins are copper-containing oxygen carriers occurring freely dissolved in the hemolymph of many mollusks and arthropods. In Maja squinado (Mediterranean spider crab), this protein is Hemocyanin subunit 5.